The primary structure comprises 322 residues: Corticotropin-releasing factor-binding protein (322 aa).

The first 24 residues, 1–24 (MSPNFKLQCHFTLILLTALRGESR), serve as a signal peptide directing secretion. 5 disulfide bridges follow: Cys60–Cys81, Cys104–Cys141, Cys183–Cys205, Cys237–Cys264, and Cys277–Cys318. Residue Asn204 is glycosylated (N-linked (GlcNAc...) asparagine).

It belongs to the CRF-binding protein family.

The protein resides in the secreted. Binds CRF and inactivates it. May prevent inappropriate pituitary-adrenal stimulation in pregnancy. This Rattus norvegicus (Rat) protein is Corticotropin-releasing factor-binding protein (Crhbp).